The primary structure comprises 160 residues: Sulfur-rich protein (160 aa).

Transmembrane regions (helical) follow at residues 63-83 (ITMI…TFVL) and 92-112 (FLFL…SVFM).

It localises to the membrane. The sequence is that of Sulfur-rich protein (srp) from Chlamydia abortus (strain DSM 27085 / S26/3) (Chlamydophila abortus).